A 208-amino-acid chain; its full sequence is Flavin-dependent thymidylate synthase (208 aa).

Residues 1–208 (MEVICKHYTP…QYLFEDCLKH (208 aa)) enclose the ThyX domain. FAD contacts are provided by residues S50 and 74-76 (RHR). DUMP-binding positions include 71–74 (ELSR), 84–86 (SSR), and K147. The ThyX motif motif lies at 74–84 (RHRIASLSVKS). FAD-binding positions include 163–165 (NAR) and N169. A dUMP-binding site is contributed by R174. The active-site Involved in ionization of N3 of dUMP, leading to its activation is the R174.

Belongs to the thymidylate synthase ThyX family. In terms of assembly, homotetramer. FAD serves as cofactor.

It catalyses the reaction dUMP + (6R)-5,10-methylene-5,6,7,8-tetrahydrofolate + NADPH + H(+) = dTMP + (6S)-5,6,7,8-tetrahydrofolate + NADP(+). The protein operates within pyrimidine metabolism; dTTP biosynthesis. Functionally, catalyzes the reductive methylation of 2'-deoxyuridine-5'-monophosphate (dUMP) to 2'-deoxythymidine-5'-monophosphate (dTMP) while utilizing 5,10-methylenetetrahydrofolate (mTHF) as the methyl donor, and NADPH and FADH(2) as the reductant. The polypeptide is Flavin-dependent thymidylate synthase (Helicobacter pylori (strain J99 / ATCC 700824) (Campylobacter pylori J99)).